A 448-amino-acid polypeptide reads, in one-letter code: C4-dicarboxylate transport protein (448 aa).

The next 9 membrane-spanning stretches (helical) occupy residues 13-33 (SLYA…HFYP), 49-69 (LIKM…IAGM), 81-101 (LALL…LLVV), 149-169 (AFAK…GFAL), 193-213 (IVGI…AFTI), 227-247 (LMGA…GIVS), 294-314 (VVGL…SIYL), 336-356 (TLLA…GSGF), and 357-377 (IVLA…LALI).

The protein belongs to the dicarboxylate/amino acid:cation symporter (DAACS) (TC 2.A.23) family.

It localises to the cell inner membrane. In terms of biological role, responsible for the transport of dicarboxylates such as succinate, fumarate, and malate from the periplasm across the membrane. The protein is C4-dicarboxylate transport protein of Albidiferax ferrireducens (strain ATCC BAA-621 / DSM 15236 / T118) (Rhodoferax ferrireducens).